An 818-amino-acid chain; its full sequence is Elongation factor G, mitochondrial (818 aa).

A mitochondrion-targeting transit peptide spans 1-23 (MFLGRAASRTCRHSQPLRVAARA). The disordered stretch occupies residues 67–96 (MASTATATKPTEEASSSDQPPAPAHKLTDN). The segment covering 69–85 (STATATKPTEEASSSDQ) has biased composition (polar residues). Residues 102–390 (TFQRNIGISA…GVCEYLPNPS (289 aa)) enclose the tr-type G domain. GTP is bound by residues 111-118 (AHIDSGKT), 188-192 (DTPGH), and 242-245 (NKMD).

The protein belongs to the TRAFAC class translation factor GTPase superfamily. Classic translation factor GTPase family. EF-G/EF-2 subfamily.

It localises to the mitochondrion. Its pathway is protein biosynthesis; polypeptide chain elongation. In terms of biological role, mitochondrial GTPase that catalyzes the GTP-dependent ribosomal translocation step during translation elongation. During this step, the ribosome changes from the pre-translocational (PRE) to the post-translocational (POST) state as the newly formed A-site-bound peptidyl-tRNA and P-site-bound deacylated tRNA move to the P and E sites, respectively. Catalyzes the coordinated movement of the two tRNA molecules, the mRNA and conformational changes in the ribosome. This chain is Elongation factor G, mitochondrial, found in Coprinopsis cinerea (strain Okayama-7 / 130 / ATCC MYA-4618 / FGSC 9003) (Inky cap fungus).